A 205-amino-acid chain; its full sequence is Bcl2-associated agonist of cell death (205 aa).

The interval 1 to 139 (MGTPKQPSLA…PFRGRSRSAP (139 aa)) is disordered. Ser-67 is subject to Phosphoserine. Polar residues predominate over residues 85–98 (IVQQQPGQAANNSH). The residue at position 113 (Ser-113) is a Phosphoserine. Positions 118-128 (TEEDEGMEEEL) are enriched in acidic residues. At Ser-129 the chain carries Phosphoserine. Residues Arg-132 and Arg-134 each carry the asymmetric dimethylarginine; by PRMT1 modification. Ser-135 bears the Phosphoserine mark. A Phosphoserine; by PKA, PKB, PAK1, RPS6KA1, RPS6KB1 and PKC/PRKCQ modification is found at Ser-137. The BH3 motif lies at 148-162 (YGRELRRMSDEFEGS). 2 positions are modified to phosphoserine: Ser-156 and Ser-171. The segment at 161 to 180 (GSFKGLPRPKSAGTATQMRQ) is disordered.

It belongs to the Bcl-2 family. Forms heterodimers with the anti-apoptotic proteins, Bcl-X(L), Bcl-2 and Bcl-W. Also binds protein S100A10. The Ser-113/Ser-137 phosphorylated form binds 14-3-3 proteins. Interacts with AKT1 and PIM3. Interacts with HIF3A (via C-terminus domain); the interaction reduces the binding between BAD and BAX. Interacts (via BH3 domain) with NOL3 (via CARD domain); preventing the association of BAD with BCL2. Interacts with GIMAP3/IAN4 and GIMAP5/IAN5. In terms of processing, phosphorylated at one or more of Ser-113, Ser-137, Ser-156 and Ser-171 in response to survival stimuli, which blocks its pro-apoptotic activity. Phosphorylation on Ser-137 or Ser-113 promotes heterodimerization with 14-3-3 proteins. This interaction then facilitates the phosphorylation at Ser-156, a site within the BH3 motif, leading to the release of Bcl-X(L) and the promotion of cell survival. Ser-137 is the major site of AKT/PKB phosphorylation, Ser-156 the major site of protein kinase A (CAPK) phosphorylation. Methylation at Arg-132 and Arg-134 by PRMT1 inhibits Akt-mediated phosphorylation at Ser-137. In terms of tissue distribution, expressed in all tissues tested, including brain, liver, spleen and heart. In the brain, restricted to epithelial cells of the choroid plexus. Isoform alpha is the more abundant form.

It localises to the mitochondrion outer membrane. The protein resides in the cytoplasm. Its function is as follows. Promotes cell death. Successfully competes for the binding to Bcl-X(L), Bcl-2 and Bcl-W, thereby affecting the level of heterodimerization of these proteins with BAX. Can reverse the death repressor activity of Bcl-X(L), but not that of Bcl-2. Appears to act as a link between growth factor receptor signaling and the apoptotic pathways. This Rattus norvegicus (Rat) protein is Bcl2-associated agonist of cell death (Bad).